The following is a 327-amino-acid chain: Glutaminase (327 aa).

Residues serine 92, asparagine 143, asparagine 195, tyrosine 218, tyrosine 263, and valine 281 each coordinate substrate.

It belongs to the glutaminase family. In terms of assembly, homotetramer.

The catalysed reaction is L-glutamine + H2O = L-glutamate + NH4(+). The chain is Glutaminase from Synechocystis sp. (strain ATCC 27184 / PCC 6803 / Kazusa).